The sequence spans 297 residues: Pyridoxal 5'-phosphate synthase subunit Pdx1 (297 aa).

D27 contacts D-ribose 5-phosphate. The active-site Schiff-base intermediate with D-ribose 5-phosphate is the K84. G156 contacts D-ribose 5-phosphate. R168 provides a ligand contact to D-glyceraldehyde 3-phosphate. Residues G217 and 238-239 each bind D-ribose 5-phosphate; that span reads GS.

The protein belongs to the PdxS/SNZ family. Homohexamer and homododecamer. In the presence of Pdx2, forms a dodecamer of heterodimers.

The enzyme catalyses aldehydo-D-ribose 5-phosphate + D-glyceraldehyde 3-phosphate + L-glutamine = pyridoxal 5'-phosphate + L-glutamate + phosphate + 3 H2O + H(+). Its pathway is cofactor biosynthesis; pyridoxal 5'-phosphate biosynthesis. Its function is as follows. Catalyzes the formation of pyridoxal 5'-phosphate from ribose 5-phosphate (RBP), glyceraldehyde 3-phosphate (G3P) and ammonia. The ammonia is provided by Pdx2. Can also use ribulose 5-phosphate and dihydroxyacetone phosphate as substrates, resulting from enzyme-catalyzed isomerization of RBP and G3P, respectively. The chain is Pyridoxal 5'-phosphate synthase subunit Pdx1 from Plasmodium berghei.